A 347-amino-acid chain; its full sequence is Protein phosphatase 1 regulatory subunit 3G (347 aa).

Residues 1-77 form a disordered region; that stretch reads MDPSGEQLHR…ELQEYRRSRA (77 aa). The span at 13 to 22 shows a compositional bias: polar residues; that stretch reads ASSSTSSGDP. Serine 81 is subject to Phosphoserine. The 140-residue stretch at 200 to 339 folds into the CBM21 domain; the sequence is EERLRRQRVC…NNEGANYTLR (140 aa). A disordered region spans residues 258–286; sequence DPESVEPLPPLQSGDSGSKAEDSEEGPGT.

Functionally, glycogen-targeting subunit for protein phosphatase 1 (PP1). Involved in the regulation of hepatic glycogenesis in a manner coupled to the fasting-feeding cycle and distinct from other glycogen-targeting subunits. The sequence is that of Protein phosphatase 1 regulatory subunit 3G (Ppp1r3g) from Mus musculus (Mouse).